A 1524-amino-acid chain; its full sequence is Protein dispatched homolog 1 (1524 aa).

N59 is a glycosylation site (N-linked (GlcNAc...) asparagine). The next 4 membrane-spanning stretches (helical) occupy residues 190–210 (VVVL…GVLV), 500–520 (LLMD…VMCV), 525–545 (MFIT…SYFL), and 549–569 (VFHF…LVGI). The SSD domain occupies 486–658 (GIEFGIKHSL…VTWLPAVVVL (173 aa)). Residue N582 is glycosylated (N-linked (GlcNAc...) asparagine). 8 consecutive transmembrane segments (helical) span residues 604 to 624 (AALS…ANYV), 638 to 658 (GTAI…VVVL), 719 to 739 (YLWL…VCIN), 988 to 1008 (MGLS…NIII), 1010 to 1030 (LYAI…LVLL), 1040 to 1060 (VTIS…GVAY), 1079 to 1099 (VGSA…MMMP), and 1107 to 1127 (QLGT…TFFF).

Belongs to the dispatched family. As to quaternary structure, interacts with SHH via the cholesterol anchor of the dually lipid-modified SHH (ShhNp).

The protein localises to the membrane. Functions in hedgehog (Hh) signaling. Regulates the release and extracellular accumulation of cholesterol-modified hedgehog proteins and is hence required for effective production of the Hh signal. Synergizes with SCUBE2 to cause an increase in SHH secretion. The protein is Protein dispatched homolog 1 (DISP1) of Homo sapiens (Human).